Here is a 112-residue protein sequence, read N- to C-terminus: UPF0102 protein Spea_0251 (112 aa).

This sequence belongs to the UPF0102 family.

The protein is UPF0102 protein Spea_0251 of Shewanella pealeana (strain ATCC 700345 / ANG-SQ1).